The primary structure comprises 70 residues: Disintegrin triflavin (70 aa).

Residues 1–70 (GEECDCGSPS…SADCPRWNGL (70 aa)) form the Disintegrin domain. Cystine bridges form between C4/C19, C6/C14, C13/C36, C27/C33, C32/C57, and C45/C64. Residues 49–51 (RGD) carry the Cell attachment site motif.

This sequence belongs to the venom metalloproteinase (M12B) family. P-II subfamily. P-IIa sub-subfamily. Monomer. Expressed by the venom gland.

It localises to the secreted. Functionally, inhibits fibrinogen interaction with platelets. Acts by binding to alpha-IIb/beta-3 (ITGA2B/ITGB3) on the platelet surface and inhibits aggregation induced by ADP, thrombin, platelet-activating factor and collagen. This Protobothrops flavoviridis (Habu) protein is Disintegrin triflavin.